We begin with the raw amino-acid sequence, 66 residues long: Transmembrane protein B66L (66 aa).

A signal peptide spans 1–20; the sequence is MDIKRALILFLLFLVVLSNA. Residues 21-40 are Extracellular-facing; sequence FVDYIISNFNHAVTCRKPTY. Residues 41-61 traverse the membrane as a helical segment; the sequence is FGIVLQGIFLVILFSIVDYLI. At 62–66 the chain is on the cytoplasmic side; it reads NENIL.

The protein belongs to the asfivirus B66L family.

Its subcellular location is the host membrane. The chain is Transmembrane protein B66L from Ornithodoros (relapsing fever ticks).